A 233-amino-acid polypeptide reads, in one-letter code: Biosynthetic peptidoglycan transglycosylase (233 aa).

The helical transmembrane segment at 8-28 (LIALPVGIFIFFNAYVYGNII) threads the bilayer.

This sequence belongs to the glycosyltransferase 51 family.

It is found in the cell inner membrane. The enzyme catalyses [GlcNAc-(1-&gt;4)-Mur2Ac(oyl-L-Ala-gamma-D-Glu-L-Lys-D-Ala-D-Ala)](n)-di-trans,octa-cis-undecaprenyl diphosphate + beta-D-GlcNAc-(1-&gt;4)-Mur2Ac(oyl-L-Ala-gamma-D-Glu-L-Lys-D-Ala-D-Ala)-di-trans,octa-cis-undecaprenyl diphosphate = [GlcNAc-(1-&gt;4)-Mur2Ac(oyl-L-Ala-gamma-D-Glu-L-Lys-D-Ala-D-Ala)](n+1)-di-trans,octa-cis-undecaprenyl diphosphate + di-trans,octa-cis-undecaprenyl diphosphate + H(+). It functions in the pathway cell wall biogenesis; peptidoglycan biosynthesis. Its function is as follows. Peptidoglycan polymerase that catalyzes glycan chain elongation from lipid-linked precursors. This Neisseria meningitidis serogroup C (strain 053442) protein is Biosynthetic peptidoglycan transglycosylase.